We begin with the raw amino-acid sequence, 518 residues long: Efflux pump terJ (518 aa).

Residues 43–63 (IAFIVVVCMAQLVSQAGLGQV) form a helical membrane-spanning segment. N79 carries an N-linked (GlcNAc...) asparagine glycan. A run of 12 helical transmembrane segments spans residues 82–102 (QLSW…LGAG), 112–132 (LLFT…AFAE), 135–155 (GPVF…FLLP), 177–197 (AFGS…ALAA), 204–224 (WGFW…IFWV), 244–264 (IAGC…LNMA), 272–292 (PYIY…GYIE), 311–331 (FVLA…FYGW), 339–359 (GISP…GFVA), 364–384 (GLIL…AAFC), 400–420 (WAQL…SFPA), and 439–459 (SLVA…GAIV). Residue N466 is glycosylated (N-linked (GlcNAc...) asparagine). Residues 477 to 497 (AWYLGVGLAASGIILTMFFAL) form a helical membrane-spanning segment.

Belongs to the major facilitator superfamily.

The protein resides in the cell membrane. In terms of biological role, efflux pump that might be required for efficient secretion of terrein or other secondary metabolies produced by the terrein genne cluster. This Aspergillus terreus (strain NIH 2624 / FGSC A1156) protein is Efflux pump terJ.